The following is a 568-amino-acid chain: Proline--tRNA ligase (568 aa).

The protein belongs to the class-II aminoacyl-tRNA synthetase family. ProS type 1 subfamily. In terms of assembly, homodimer.

Its subcellular location is the cytoplasm. It catalyses the reaction tRNA(Pro) + L-proline + ATP = L-prolyl-tRNA(Pro) + AMP + diphosphate. Its function is as follows. Catalyzes the attachment of proline to tRNA(Pro) in a two-step reaction: proline is first activated by ATP to form Pro-AMP and then transferred to the acceptor end of tRNA(Pro). As ProRS can inadvertently accommodate and process non-cognate amino acids such as alanine and cysteine, to avoid such errors it has two additional distinct editing activities against alanine. One activity is designated as 'pretransfer' editing and involves the tRNA(Pro)-independent hydrolysis of activated Ala-AMP. The other activity is designated 'posttransfer' editing and involves deacylation of mischarged Ala-tRNA(Pro). The misacylated Cys-tRNA(Pro) is not edited by ProRS. The polypeptide is Proline--tRNA ligase (Listeria monocytogenes serovar 1/2a (strain ATCC BAA-679 / EGD-e)).